A 220-amino-acid chain; its full sequence is UPF0758 protein ASA_4229 (220 aa).

One can recognise an MPN domain in the interval 95-220; that stretch reads EQLQRGDALT…TVSFAERGWL (126 aa). 3 residues coordinate Zn(2+): His169, His171, and Asp182. Residues 169 to 182 carry the JAMM motif motif; the sequence is HNHPSGVAEPSRAD.

It belongs to the UPF0758 family.

The sequence is that of UPF0758 protein ASA_4229 from Aeromonas salmonicida (strain A449).